Here is a 565-residue protein sequence, read N- to C-terminus: Phosphatidylinositol 4-kinase gamma 4 (565 aa).

2 consecutive Ubiquitin-like domains span residues 32–104 and 109–187; these read IVIF…LVVR and RAIS…RPAK. Residues 257–542 form the PI3K/PI4K catalytic domain; that stretch reads GYLPVMSTEG…AILPGTSEET (286 aa). Residues 263 to 269 are G-loop; sequence STEGSGG. Residues 264-270 and Lys-286 each bind ATP; that span reads TEGSGGV. The segment at 291-311 is disordered; the sequence is EPMAKNNPRGLPLSTDGEGLK. 369–372 lines the ATP pocket; sequence QLFV. Residues 402–410 form a catalytic loop region; that stretch reads ANADRHAGN. Residues 425–451 are activation loop; sequence PIDHGYCLPEKFEDCTFEWLYWPQARE. Residue Asp-427 participates in ATP binding.

Belongs to the PI3/PI4-kinase family. Type II PI4K subfamily. Interacts with FTIP1 and RPN10. Specifically expressed in the phloem including companion cells.

It localises to the nucleus. The protein resides in the endoplasmic reticulum. The enzyme catalyses a 1,2-diacyl-sn-glycero-3-phospho-(1D-myo-inositol) + ATP = a 1,2-diacyl-sn-glycero-3-phospho-(1D-myo-inositol 4-phosphate) + ADP + H(+). Functionally, the phosphorylation of phosphatidylinositol (PI) to PI4P is the first committed step in the generation of phosphatidylinositol 4,5-bisphosphate (PIP2), a precursor of the second messenger inositol 1,4,5-trisphosphate (InsP3). Involved in the control of flowering under long day conditions by promoting degradation of FTIP1. Recruits FTIP1 for degradation by the 26S proteasome in leaves, which affects RFT1 transport to the shoot apical meristem (SAM). The chain is Phosphatidylinositol 4-kinase gamma 4 from Oryza sativa subsp. japonica (Rice).